The following is a 601-amino-acid chain: Probable N-acetylgalactosaminyltransferase 7 (601 aa).

Residues 1-20 (MIIARKKLQLQRLWRQRGCR) lie on the Cytoplasmic side of the membrane. Residues 21 to 38 (VATYICLGVLVLFGFVYN) form a helical; Signal-anchor for type II membrane protein membrane-spanning segment. Over 39 to 601 (SKGNSMSSIK…FVWKEFYQSS (563 aa)) the chain is Lumenal. The tract at residues 61–108 (DLTNKELPGGPDPNTIFRGSELGNYEPKEPEIPSNQPGEHGKPVPVTD) is disordered. Residue asparagine 135 is glycosylated (N-linked (GlcNAc...) asparagine). Disulfide bonds link cysteine 146–cysteine 382, cysteine 373–cysteine 452, cysteine 490–cysteine 506, cysteine 529–cysteine 542, and cysteine 568–cysteine 583. Positions 155–265 (LPTVSVVVVF…TNWLPPLLAP (111 aa)) are catalytic subdomain A. Aspartate 196 and arginine 226 together coordinate substrate. 2 residues coordinate Mn(2+): aspartate 249 and histidine 251. A catalytic subdomain B region spans residues 328–390 (PFRSPTHAGG…PCSHVGHVYR (63 aa)). Tryptophan 359 provides a ligand contact to substrate. Histidine 387 is a binding site for Mn(2+). Residues arginine 390 and tyrosine 395 each coordinate substrate. Positions 477–595 (DVWGEARNPA…DNERQKFVWK (119 aa)) constitute a Ricin B-type lectin domain.

This sequence belongs to the glycosyltransferase 2 family. GalNAc-T subfamily. Requires Mn(2+) as cofactor.

The protein resides in the golgi apparatus membrane. The protein operates within protein modification; protein glycosylation. Probable glycopeptide transferase involved in O-linked oligosaccharide biosynthesis. Glycopeptide transferases catalyze the transfer of an N-acetyl-D-galactosamine residue to an already glycosylated peptide. In contrast to other members of the family, it does not act as a peptide transferase that transfers GalNAc onto serine or threonine residue on peptides that have been tested. Some peptide transferase activity is however not excluded, considering that its appropriate peptide substrate may remain unidentified. This chain is Probable N-acetylgalactosaminyltransferase 7 (gly-7), found in Caenorhabditis elegans.